A 180-amino-acid chain; its full sequence is MDLKGTTILAVKDDEGVSMAGDGQVTLGQAIVMKHGARKVRRIYKDRIIAGFAGSTADAFTLFERFEAKLEEFGGNLLRASVEMAKDWRKDKFLRRLEAMLLVSDGTTLLMLSGTGDVIEPDDGVAAIGSGGPYALAAARALQRHTALSAQEIVTKAMAIAGELCVFTNDHLTVENARRA.

Residue Thr6 is part of the active site. The Na(+) site is built by Gly162, Cys165, and Thr168.

It belongs to the peptidase T1B family. HslV subfamily. As to quaternary structure, a double ring-shaped homohexamer of HslV is capped on each side by a ring-shaped HslU homohexamer. The assembly of the HslU/HslV complex is dependent on binding of ATP.

The protein resides in the cytoplasm. It catalyses the reaction ATP-dependent cleavage of peptide bonds with broad specificity.. Its activity is regulated as follows. Allosterically activated by HslU binding. Protease subunit of a proteasome-like degradation complex believed to be a general protein degrading machinery. The polypeptide is ATP-dependent protease subunit HslV (Oleidesulfovibrio alaskensis (strain ATCC BAA-1058 / DSM 17464 / G20) (Desulfovibrio alaskensis)).